We begin with the raw amino-acid sequence, 325 residues long: DNA-directed RNA polymerase subunit alpha (325 aa).

Residues 1–231 (MQTSLLKPKI…DQLSVFAALE (231 aa)) are alpha N-terminal domain (alpha-NTD). The segment at 246-325 (IDPILLRPVD…ENWPPAGLDK (80 aa)) is alpha C-terminal domain (alpha-CTD).

Belongs to the RNA polymerase alpha chain family. Homodimer. The RNAP catalytic core consists of 2 alpha, 1 beta, 1 beta' and 1 omega subunit. When a sigma factor is associated with the core the holoenzyme is formed, which can initiate transcription.

The enzyme catalyses RNA(n) + a ribonucleoside 5'-triphosphate = RNA(n+1) + diphosphate. In terms of biological role, DNA-dependent RNA polymerase catalyzes the transcription of DNA into RNA using the four ribonucleoside triphosphates as substrates. The chain is DNA-directed RNA polymerase subunit alpha from Paraburkholderia phymatum (strain DSM 17167 / CIP 108236 / LMG 21445 / STM815) (Burkholderia phymatum).